A 382-amino-acid polypeptide reads, in one-letter code: Glycerate dehydrogenase (382 aa).

NAD(+) contacts are provided by residues 175–176, 271–273, and Asp-297; these read RI and CSR. The active site involves Arg-273. Glu-302 is a catalytic residue. The Proton donor role is filled by His-320. Residue 320–323 coordinates NAD(+); the sequence is HIAS.

This sequence belongs to the D-isomer specific 2-hydroxyacid dehydrogenase family.

It localises to the peroxisome. The catalysed reaction is (R)-glycerate + NAD(+) = 3-hydroxypyruvate + NADH + H(+). It participates in photosynthesis; photorespiration; 3-phospho-D-glycerate from glycine: step 3/4. This chain is Glycerate dehydrogenase (HPR-A), found in Cucumis sativus (Cucumber).